Consider the following 183-residue polypeptide: Inner membrane-spanning protein YciB (183 aa).

5 helical membrane-spanning segments follow: residues 19–39 (LYGV…QLIV), 53–73 (IMGI…DLNF), 76–96 (WKVT…QFVF), 121–141 (LGWA…SYYF), and 151–171 (TFGF…YLYP).

Belongs to the YciB family.

The protein resides in the cell inner membrane. In terms of biological role, plays a role in cell envelope biogenesis, maintenance of cell envelope integrity and membrane homeostasis. The polypeptide is Inner membrane-spanning protein YciB (Actinobacillus pleuropneumoniae serotype 7 (strain AP76)).